Consider the following 502-residue polypeptide: Bone morphogenetic protein receptor type-1B (502 aa).

An N-terminal signal peptide occupies residues 1-13 (MLLRSSGKLNVGT). Positions 1 to 24 (MLLRSSGKLNVGTKKEDGESTAPT) are disordered. At 14 to 126 (KKEDGESTAP…DFVDGPIHHK (113 aa)) the chain is on the extracellular side. Cystine bridges form between C32–C53, C34–C38, C47–C71, C81–C95, and C96–C102. A helical transmembrane segment spans residues 127–148 (ALLISVTVCSLLLVLIILFCYF). Residues 149 to 502 (RYKRQEARPR…KMSESQDIKL (354 aa)) lie on the Cytoplasmic side of the membrane. Residues 174–203 (ESLRDLIEQSQSSGSGSGLPLLVQRTIAKQ) enclose the GS domain. Positions 204–494 (IQMVKQIGKG…LRVKKTLAKM (291 aa)) constitute a Protein kinase domain. Residues 210–218 (IGKGRYGEV) and K231 contribute to the ATP site. Catalysis depends on D332, which acts as the Proton acceptor.

The protein belongs to the protein kinase superfamily. TKL Ser/Thr protein kinase family. TGFB receptor subfamily. In terms of assembly, interacts with high affinity with GDF5; positively regulates chondrocyte differentiation. Interacts with SCUBE3. Interacts with TSC22D1/TSC-22. Interacts with TGFBR3. Mg(2+) is required as a cofactor. Mn(2+) serves as cofactor. Post-translationally, autophosphorylated.

The protein localises to the cell membrane. The catalysed reaction is L-threonyl-[receptor-protein] + ATP = O-phospho-L-threonyl-[receptor-protein] + ADP + H(+). It catalyses the reaction L-seryl-[receptor-protein] + ATP = O-phospho-L-seryl-[receptor-protein] + ADP + H(+). Its function is as follows. On ligand binding, forms a receptor complex consisting of two type II and two type I transmembrane serine/threonine kinases. Type II receptors phosphorylate and activate type I receptors which autophosphorylate, then bind and activate SMAD transcriptional regulators. Receptor for BMP7/OP-1. Receptor for GDF5. Positively regulates chondrocyte differentiation through GDF5 interaction. The chain is Bone morphogenetic protein receptor type-1B (Bmpr1b) from Mus musculus (Mouse).